The sequence spans 366 residues: NADH-quinone oxidoreductase subunit D (366 aa).

Belongs to the complex I 49 kDa subunit family. As to quaternary structure, NDH-1 is composed of 14 different subunits. Subunits NuoB, C, D, E, F, and G constitute the peripheral sector of the complex.

Its subcellular location is the cell membrane. It carries out the reaction a quinone + NADH + 5 H(+)(in) = a quinol + NAD(+) + 4 H(+)(out). Functionally, NDH-1 shuttles electrons from NADH, via FMN and iron-sulfur (Fe-S) centers, to quinones in the respiratory chain. The immediate electron acceptor for the enzyme in this species is believed to be a menaquinone. Couples the redox reaction to proton translocation (for every two electrons transferred, four hydrogen ions are translocated across the cytoplasmic membrane), and thus conserves the redox energy in a proton gradient. This Desulforamulus reducens (strain ATCC BAA-1160 / DSM 100696 / MI-1) (Desulfotomaculum reducens) protein is NADH-quinone oxidoreductase subunit D.